Here is a 310-residue protein sequence, read N- to C-terminus: Oxygen-dependent coproporphyrinogen-III oxidase (310 aa).

Ser92 serves as a coordination point for substrate. The a divalent metal cation site is built by His96 and His106. His106 (proton donor) is an active-site residue. 108-110 (NVR) contacts substrate. Residues His145 and His175 each coordinate a divalent metal cation. Residues 240–275 (YVEFNLIWDRGTLFGLQSGGRTESILMSMPPLARWE) are important for dimerization. A substrate-binding site is contributed by 258–260 (GGR).

Belongs to the aerobic coproporphyrinogen-III oxidase family. As to quaternary structure, homodimer. A divalent metal cation is required as a cofactor.

It is found in the cytoplasm. The catalysed reaction is coproporphyrinogen III + O2 + 2 H(+) = protoporphyrinogen IX + 2 CO2 + 2 H2O. It participates in porphyrin-containing compound metabolism; protoporphyrin-IX biosynthesis; protoporphyrinogen-IX from coproporphyrinogen-III (O2 route): step 1/1. Involved in the heme biosynthesis. Catalyzes the aerobic oxidative decarboxylation of propionate groups of rings A and B of coproporphyrinogen-III to yield the vinyl groups in protoporphyrinogen-IX. The polypeptide is Oxygen-dependent coproporphyrinogen-III oxidase (Pectobacterium atrosepticum (strain SCRI 1043 / ATCC BAA-672) (Erwinia carotovora subsp. atroseptica)).